Here is a 470-residue protein sequence, read N- to C-terminus: Crh-like protein UTR2 (470 aa).

Residues M1–A23 form the signal peptide. C58 and C69 form a disulfide bridge. 3 N-linked (GlcNAc...) asparagine glycosylation sites follow: N65, N100, and N125. The GH16 domain occupies S95–S282. E168 acts as the Nucleophile in catalysis. The active-site Proton donor is the E172. Chitin is bound at residue E172. N-linked (GlcNAc...) asparagine glycosylation is found at N177, N194, N198, N202, N235, and N239. Positions 259 and 270 each coordinate chitin. N314 and N327 each carry an N-linked (GlcNAc...) asparagine glycan. The segment at S347–A446 is disordered. Low complexity-rich tracts occupy residues T370–V384 and T392–A408. Residues K409–D418 show a composition bias toward polar residues. Low complexity predominate over residues T433 to A446. The GPI-anchor amidated serine moiety is linked to residue S440. Positions S441–M470 are cleaved as a propeptide — removed in mature form. A glycan (N-linked (GlcNAc...) asparagine) is linked at N450.

It belongs to the glycosyl hydrolase 16 family. CRH1 subfamily. In terms of processing, the GPI-anchor is attached to the protein in the endoplasmic reticulum and serves to target the protein to the cell surface. There, the glucosamine-inositol phospholipid moiety is cleaved off and the GPI-modified mannoprotein is covalently attached via its lipidless GPI glycan remnant to the 1,6-beta-glucan of the outer cell wall layer.

The protein resides in the secreted. The protein localises to the cell wall. It is found in the membrane. The enzyme catalyses Random endo-hydrolysis of N-acetyl-beta-D-glucosaminide (1-&gt;4)-beta-linkages in chitin and chitodextrins.. Functionally, dual chitinase/transglycosylase that plays a role in cell wall architecture. Chitinase and transglycosylase activities are coupled. Required for the polysaccharide cross-linking at the septa and the cell wall. More specifically, transfers chitin to 1,6-beta-glucan in the cell wall. Plays an important role in fungal pathogenesis via its functions in cell wall assembly and regeneration, filamentation, and adherence to host cells. Acts as a cell surface antigen in acute candidemia patients. This Candida albicans (strain SC5314 / ATCC MYA-2876) (Yeast) protein is Crh-like protein UTR2.